Consider the following 1153-residue polypeptide: PPi-type phosphoenolpyruvate carboxykinase 3 (1153 aa).

Residues 1085 to 1131 are a coiled coil; it reads RQKLEVAKLNKDLAYLNKTIAEKPRLAETLNKQIAAVKEELQYVSSE.

Belongs to the PPi-type phosphoenolpyruvate carboxykinase family. As to quaternary structure, monomer and trimer; forms heterotrimers with PEPCK1 and PEPCK2.

Its subcellular location is the cytoplasm. The protein localises to the cytosol. The enzyme catalyses oxaloacetate + diphosphate = phosphoenolpyruvate + phosphate + CO2. Inorganic pyrophosphate (PPi)-dependent phosphoenolpyruvate carboxykinase, which regulates the carbon flow of the central metabolism by fixing CO(2) to phosphoenolpyruvate to produce oxaloacetate. Can also produce pyruvate and diphosphate from phosphoenolpyruvate and phosphate. The sequence is that of PPi-type phosphoenolpyruvate carboxykinase 3 from Entamoeba histolytica (strain ATCC 30459 / HM-1:IMSS / ABRM).